The sequence spans 108 residues: Protein RnfH (108 aa).

The tract at residues 86 to 108 is disordered; it reads ARRRRAEKAKEEGRANKVTGGRA.

Belongs to the UPF0125 (RnfH) family.

The sequence is that of Protein RnfH from Pseudoalteromonas atlantica (strain T6c / ATCC BAA-1087).